A 99-amino-acid chain; its full sequence is DNA-binding protein Fis (99 aa).

The H-T-H motif DNA-binding region spans 75 to 94 (QTRAATMLGINRGTLRKKLK).

Belongs to the transcriptional regulatory Fis family. As to quaternary structure, homodimer.

Functionally, activates ribosomal RNA transcription. Plays a direct role in upstream activation of rRNA promoters. This Pasteurella multocida (strain Pm70) protein is DNA-binding protein Fis.